The sequence spans 222 residues: uncharacterized protein (222 aa).

Positions 43–73 (SQNEEFEYEMERMLSILNEQTMDLTQLQSRI) form a coiled coil.

This is an uncharacterized protein from Rickettsia conorii (strain ATCC VR-613 / Malish 7).